A 338-amino-acid chain; its full sequence is Probable arabinan endo-1,5-alpha-L-arabinosidase A (338 aa).

An N-terminal signal peptide occupies residues 1–20; sequence MRASFVVTAPLLAAAVHGYA. Residue D33 is the Proton acceptor of the active site. Residue E217 is the Proton donor of the active site.

This sequence belongs to the glycosyl hydrolase 43 family.

The protein resides in the secreted. The enzyme catalyses Endohydrolysis of (1-&gt;5)-alpha-arabinofuranosidic linkages in (1-&gt;5)-arabinans.. Its pathway is glycan metabolism; L-arabinan degradation. In terms of biological role, endo-1,5-alpha-L-arabinanase involved in degradation of pectin. Its preferred substrate is linear 1,5-alpha-L-arabinan. This Aspergillus terreus (strain NIH 2624 / FGSC A1156) protein is Probable arabinan endo-1,5-alpha-L-arabinosidase A (abnA).